The primary structure comprises 65 residues: uncharacterized protein (65 aa).

An N-terminal signal peptide occupies residues 1-22 (MKFIKLFTFLVYLFVTLTNVFA).

This is an uncharacterized protein from Invertebrate iridescent virus 6 (IIV-6).